The sequence spans 103 residues: Protein FMC1 homolog (103 aa).

The protein belongs to the FMC1 family.

This is Protein FMC1 homolog from Nematostella vectensis (Starlet sea anemone).